An 88-amino-acid polypeptide reads, in one-letter code: Selenoprotein W (88 aa).

Residues 10–13 (CGAU) constitute a cross-link (cysteinyl-selenocysteine (Cys-Sec); redox-active). Position 13 (Sec13) is a non-standard amino acid, selenocysteine. Cys37 carries the S-glutathionyl cysteine modification.

Belongs to the SelWTH family. Selenoprotein W subfamily. As to quaternary structure, interacts with DPYSL2, PRDX1, YWHAB, YWHAG, HSP70 and HSP90. In the embryo, expressed in the developing nervous system and in mesoderm-derived tissues such as heart and limbs. In the adult, predominantly expressed in brain, skeletal muscle and heart.

It is found in the cytoplasm. Functionally, plays a role as a glutathione (GSH)-dependent antioxidant. May be involved in a redox-related process. May play a role in the myopathies of selenium deficiency. In Mus musculus (Mouse), this protein is Selenoprotein W.